The sequence spans 197 residues: dTTP/UTP pyrophosphatase (197 aa).

Asp-70 serves as the catalytic Proton acceptor.

This sequence belongs to the Maf family. YhdE subfamily. A divalent metal cation is required as a cofactor.

It localises to the cytoplasm. The catalysed reaction is dTTP + H2O = dTMP + diphosphate + H(+). It catalyses the reaction UTP + H2O = UMP + diphosphate + H(+). Nucleoside triphosphate pyrophosphatase that hydrolyzes dTTP and UTP. May have a dual role in cell division arrest and in preventing the incorporation of modified nucleotides into cellular nucleic acids. This Shigella sonnei (strain Ss046) protein is dTTP/UTP pyrophosphatase (yceF2).